Reading from the N-terminus, the 504-residue chain is Pentatricopeptide repeat-containing protein At1g05600 (504 aa).

PPR repeat units follow at residues 45 to 79 (NGSV…SCEC), 80 to 114 (KDSV…NCVN), 115 to 145 (WSLS…YCYG), 151 to 185 (RITA…GCYP), 186 to 216 (DRDS…MFWR), 225 to 259 (DIVV…GLKA), 260 to 296 (PKRC…GAIP), 297 to 331 (CLDS…GFEP), 332 to 367 (TPFI…HCLP), 368 to 398 (TVGV…MSKQ), 404 to 438 (NEET…SHFP), and 439 to 473 (GVET…DMVP).

It belongs to the PPR family. P subfamily.

The chain is Pentatricopeptide repeat-containing protein At1g05600 from Arabidopsis thaliana (Mouse-ear cress).